The chain runs to 655 residues: p-hydroxybenzoic acid efflux pump subunit AaeB (655 aa).

The Periplasmic segment spans residues 1–12 (MDIFSIANQHIR). A helical membrane pass occupies residues 13-33 (FAVKLATAIVLALFVGFHFQL). Residues 34 to 37 (ETPR) are Cytoplasmic-facing. Residues 38 to 58 (WAVLTAAIVAAGPAFAAGGEP) form a helical membrane-spanning segment. Residues 59–68 (YSGAIRYRGF) lie on the Periplasmic side of the membrane. The helical transmembrane segment at 69–89 (LRIIGTFIGCIAGLVIIIAMI) threads the bilayer. Topologically, residues 90–92 (RAP) are cytoplasmic. A helical transmembrane segment spans residues 93 to 113 (LLMILVCCIWAGFCTWISSLV). Topologically, residues 114–120 (RIENSYA) are periplasmic. A helical membrane pass occupies residues 121-141 (WGLAGYTALIIVITIQPEPLL). Residues 142–151 (TPQFAVERCS) are Cytoplasmic-facing. Residues 152 to 172 (EIVIGIVCAIMADLLFSPRSI) form a helical membrane-spanning segment. At 173 to 369 (KQEVDRELES…RTTLSCILGT (197 aa)) the chain is on the periplasmic side. A helical membrane pass occupies residues 370–390 (LFWLWTGWTSGSGAMVMIAVV). Over 391–406 (TSLAMRLPNPRMVAID) the chain is Cytoplasmic. Residues 407 to 427 (FIYGTLAALPLGLLYFLVIIP) traverse the membrane as a helical segment. Residues 428–430 (NTQ) lie on the Periplasmic side of the membrane. The helical transmembrane segment at 431-451 (QSMLLLCISLAVLGFFLGIEV) threads the bilayer. The Cytoplasmic portion of the chain corresponds to 452–458 (QKRRLGS). Residues 459-479 (MGALASTINIIVLDNPMTFHF) traverse the membrane as a helical segment. Residues 480–481 (SQ) are Periplasmic-facing. A helical transmembrane segment spans residues 482–502 (FLDSALGQIVGCVLAFTVILL). The Cytoplasmic portion of the chain corresponds to 503-655 (VRDKSRDRTG…HKYQHALTDS (153 aa)).

The protein belongs to the aromatic acid exporter ArAE (TC 2.A.85) family.

The protein resides in the cell inner membrane. In terms of biological role, forms an efflux pump with AaeA. Could function as a metabolic relief valve, allowing to eliminate certain compounds when they accumulate to high levels in the cell. The protein is p-hydroxybenzoic acid efflux pump subunit AaeB of Escherichia coli O157:H7.